Consider the following 1891-residue polypeptide: TATA-binding protein-associated factor mot1 (1891 aa).

Residues 30–68 form an HEAT 1 repeat; that stretch reads PDELFNLLGRILPYLRSKSWDTRAAAAKAIGLIVANADT. 3 disordered regions span residues 184-216, 241-283, and 295-316; these read FVAS…LSKR, LSSR…LDRS, and FKGA…EGPN. Residues 264–275 are compositionally biased toward basic and acidic residues; that stretch reads ENGEERNGDSKP. HEAT repeat units follow at residues 473-511 and 569-606; these read SKLM…EFVK and SSFG…LEGE. Low complexity predominate over residues 699 to 710; it reads SAAAPARSSPAS. Residues 699–740 form a disordered region; it reads SAAAPARSSPASNTPEGTKGRRRKSEKKEAPPPSAHNVDGHM. HEAT repeat units lie at residues 957-996, 1139-1177, 1181-1216, and 1219-1257; these read PKKP…YYTT, YPWV…VITV, TMLV…VMED, and LPYV…LVPL. Residues 1316–1489 enclose the Helicase ATP-binding domain; the sequence is AFLNRYNLHG…WSLFDFLMPG (174 aa). Residue 1329–1336 participates in ATP binding; sequence DDMGLGKT. The DEAH box signature appears at 1440-1443; it reads DEGH. The stretch at 1526-1565 is one HEAT 8 repeat; the sequence is EALHKQVLPFLLRRLKEEVLNDLPPKIIQNYYCDPSELQR. Residues 1663–1813 enclose the Helicase C-terminal domain; sequence DLSGASYVSP…STVVNQQNAG (151 aa).

The protein belongs to the SNF2/RAD54 helicase family. In terms of assembly, forms the NCT transcriptional regulatory complex with nctA and nctB.

The protein localises to the nucleus. In terms of biological role, regulates transcription in association with TATA binding protein (TBP). Removes TBP from the TATA box via its C-terminal ATPase activity. Both transcription activation and repression require its ATPase activity. Part of the NCT transcriptional regulatory complex that acts as a key regulator of ergosterol biosynthesis and the azole exporter cdr1B. The NCT complex binds the promoters of genes linked to azole susceptibility, and especially represses the expression of cdr1B transporter. The sequence is that of TATA-binding protein-associated factor mot1 from Aspergillus fumigatus (strain CBS 144.89 / FGSC A1163 / CEA10) (Neosartorya fumigata).